The chain runs to 1484 residues: Ral GTPase-activating protein subunit beta (1484 aa).

2 disordered regions span residues 355–437 (PRSD…APRR) and 697–728 (GGENNLKSHSRTNSGISSASGGSTEPTTPDSE). Residue serine 359 is modified to Phosphoserine. A phosphothreonine mark is found at threonine 363 and threonine 379. Polar residues-rich tracts occupy residues 369-381 (SMPQSAAVNTTPP), 392-428 (NKATMKTSTVTTAHTSKVQHQASSTSPLSSPNQTSSE), and 701-725 (NLKSHSRTNSGISSASGGSTEPTTP). A phosphoserine mark is found at serine 421 and serine 710. Threonine 724 is modified (phosphothreonine). Residues 1138 to 1382 (IGYLDLLPCR…TTLEKEVPVI (245 aa)) enclose the Rap-GAP domain. Serine 1275 carries the post-translational modification Phosphoserine. A disordered region spans residues 1301–1325 (DSLNSSQRLSPSSRMKKLPQGRPVP). Low complexity predominate over residues 1302–1313 (SLNSSQRLSPSS).

In terms of assembly, component of the heterodimeric RalGAP1 complex with RALGAPA1 and of the heterodimeric RalGAP2 complex with RALGAPA2. Heterodimerization is required for activity. As to expression, detected in brain, thymus, lung, heart, spleen, liver and testis (at protein level).

In terms of biological role, non-catalytic subunit of the heterodimeric RalGAP1 and RalGAP2 complexes which act as GTPase activators for the Ras-like small GTPases RALA and RALB. In Rattus norvegicus (Rat), this protein is Ral GTPase-activating protein subunit beta.